The following is a 309-amino-acid chain: S-methyl-5'-thioadenosine phosphorylase (309 aa).

Phosphate contacts are provided by residues Thr19, 64–65, and 97–98; these read RH and SA. Met201 serves as a coordination point for substrate. Residue Ser202 coordinates phosphate. A substrate-binding site is contributed by 225–227; the sequence is DYD.

The protein belongs to the PNP/MTAP phosphorylase family. MTAP subfamily. As to quaternary structure, homotrimer.

The protein resides in the cytoplasm. Its subcellular location is the nucleus. It carries out the reaction S-methyl-5'-thioadenosine + phosphate = 5-(methylsulfanyl)-alpha-D-ribose 1-phosphate + adenine. It functions in the pathway amino-acid biosynthesis; L-methionine biosynthesis via salvage pathway; S-methyl-5-thio-alpha-D-ribose 1-phosphate from S-methyl-5'-thioadenosine (phosphorylase route): step 1/1. In terms of biological role, catalyzes the reversible phosphorylation of S-methyl-5'-thioadenosine (MTA) to adenine and 5-methylthioribose-1-phosphate. Involved in the breakdown of MTA, a major by-product of polyamine biosynthesis. Responsible for the first step in the methionine salvage pathway after MTA has been generated from S-adenosylmethionine. Has broad substrate specificity with 6-aminopurine nucleosides as preferred substrates. The chain is S-methyl-5'-thioadenosine phosphorylase from Tuber melanosporum (strain Mel28) (Perigord black truffle).